The following is a 301-amino-acid chain: Mitochondrial carnitine/acylcarnitine carrier protein (301 aa).

A2 carries the post-translational modification N-acetylalanine. Topologically, residues 2 to 12 are cytoplasmic; it reads ADQPKPISPLK. Solcar repeat units lie at residues 8-99, 108-196, and 207-293; these read ISPL…GKKL, LSYP…VKNI, and LSVP…AMKF. Residues 13 to 31 form a helical membrane-spanning segment; that stretch reads NLLAGGFGGVCLVFVGHPL. Over 32–73 the chain is Mitochondrial matrix; sequence DTVKVRLQTQPPSLPGQPPMYSGTFDCFRKTLFREGIRGLYR. A helical membrane pass occupies residues 74 to 93; the sequence is GMAAPIIGVTPMFAVCFFGF. The Cytoplasmic portion of the chain corresponds to 94-112; that stretch reads GLGKKLQQKHPEDVLSYPQ. Residues 113-131 form a helical membrane-spanning segment; the sequence is LFAAGMLSGIFTTGIMTPG. The Mitochondrial matrix segment spans residues 132–170; sequence ERIKCLLQIQASSGETKYTGTLDCAKKLYQEFGIRGIYK. K148 and K157 each carry N6-acetyllysine. An N6-acetyllysine; alternate modification is found at K170. Residue K170 is modified to N6-succinyllysine; alternate. The chain crosses the membrane as a helical span at residues 171-190; the sequence is GTVVTLMRDVPASGMYFMTY. At 191-211 the chain is on the cytoplasmic side; that stretch reads EWVKNIFTPEGKRVSELSVPR. A helical membrane pass occupies residues 212–230; sequence VLVAGGIAGIFNWAVAIPP. Topologically, residues 231–267 are mitochondrial matrix; that stretch reads DVLKSRFQTAPPGKYPNGFRDVLRELIPDEGVTSLYK. Residues 268–287 traverse the membrane as a helical segment; the sequence is GFNAVMIRAFPANAACFLGF. Residues 288 to 301 lie on the Cytoplasmic side of the membrane; that stretch reads EVAMKFLNWATPNL.

Belongs to the mitochondrial carrier (TC 2.A.29) family.

It localises to the mitochondrion inner membrane. It carries out the reaction O-acetyl-(R)-carnitine(in) + (R)-carnitine(out) = O-acetyl-(R)-carnitine(out) + (R)-carnitine(in). It catalyses the reaction an O-acyl-(R)-carnitine(in) + (R)-carnitine(out) = an O-acyl-(R)-carnitine(out) + (R)-carnitine(in). The enzyme catalyses O-propanoyl-(R)-carnitine(in) + (R)-carnitine(out) = O-propanoyl-(R)-carnitine(out) + (R)-carnitine(in). The catalysed reaction is O-hexadecanoyl-(R)-carnitine(in) + (R)-carnitine(out) = O-hexadecanoyl-(R)-carnitine(out) + (R)-carnitine(in). It carries out the reaction O-octanoyl-(R)-carnitine(in) + (R)-carnitine(out) = O-octanoyl-(R)-carnitine(out) + (R)-carnitine(in). It catalyses the reaction (R)-carnitine(in) = (R)-carnitine(out). Mediates the electroneutral exchange of acylcarnitines (O-acyl-(R)-carnitine or L-acylcarnitine) of different acyl chain lengths (ranging from O-acetyl-(R)-carnitine to long-chain O-acyl-(R)-carnitines) with free carnitine ((R)-carnitine or L-carnitine) across the mitochondrial inner membrane, via a ping-pong mechanism. Key player in the mitochondrial oxidation pathway, it translocates the fatty acids in the form of acylcarnitines into the mitochondrial matrix, where the carnitine palmitoyltransferase 2 (CPT-2) activates them to undergo fatty acid beta-oxidation. Catalyzes the unidirectional transport (uniport) of carnitine at lower rates than the antiport (exchange). This is Mitochondrial carnitine/acylcarnitine carrier protein (SLC25A20) from Macaca fascicularis (Crab-eating macaque).